The sequence spans 143 residues: Transmembrane protein 80 (143 aa).

The next 4 membrane-spanning stretches (helical) occupy residues 21-41 (MLFY…LLMI), 55-75 (LVLD…RLYL), 99-119 (ALLS…DWAL), and 121-141 (ATLL…IAAF).

It is found in the membrane. The protein resides in the cell projection. Its subcellular location is the cilium. This chain is Transmembrane protein 80, found in Homo sapiens (Human).